Reading from the N-terminus, the 173-residue chain is Shikimate kinase (173 aa).

Gly11–Ser16 provides a ligand contact to ATP. Thr15 is a Mg(2+) binding site. Residues Asp33, Arg57, and Gly79 each coordinate substrate. Arg117 contacts ATP. Arg136 lines the substrate pocket.

It belongs to the shikimate kinase family. As to quaternary structure, monomer. It depends on Mg(2+) as a cofactor.

It localises to the cytoplasm. The catalysed reaction is shikimate + ATP = 3-phosphoshikimate + ADP + H(+). It participates in metabolic intermediate biosynthesis; chorismate biosynthesis; chorismate from D-erythrose 4-phosphate and phosphoenolpyruvate: step 5/7. Functionally, catalyzes the specific phosphorylation of the 3-hydroxyl group of shikimic acid using ATP as a cosubstrate. The sequence is that of Shikimate kinase from Thermodesulfovibrio yellowstonii (strain ATCC 51303 / DSM 11347 / YP87).